A 224-amino-acid polypeptide reads, in one-letter code: Ribonuclease HII (224 aa).

Positions Arg-36–Gly-224 constitute an RNase H type-2 domain. The a divalent metal cation site is built by Asp-42, Glu-43, and Asp-138.

Belongs to the RNase HII family. It depends on Mn(2+) as a cofactor. Mg(2+) serves as cofactor.

It localises to the cytoplasm. The enzyme catalyses Endonucleolytic cleavage to 5'-phosphomonoester.. Endonuclease that specifically degrades the RNA of RNA-DNA hybrids. The protein is Ribonuclease HII of Parasynechococcus marenigrum (strain WH8102).